Reading from the N-terminus, the 130-residue chain is Small ribosomal subunit protein uS8 (130 aa).

This sequence belongs to the universal ribosomal protein uS8 family. As to quaternary structure, part of the 30S ribosomal subunit.

In terms of biological role, one of the primary rRNA binding proteins, it binds directly to 16S rRNA central domain where it helps coordinate assembly of the platform of the 30S subunit. This is Small ribosomal subunit protein uS8 from Methanothermococcus thermolithotrophicus (Methanococcus thermolithotrophicus).